Consider the following 89-residue polypeptide: Small ribosomal subunit protein uS14 (89 aa).

The protein belongs to the universal ribosomal protein uS14 family. Part of the 30S ribosomal subunit. Contacts proteins S3 and S10.

In terms of biological role, binds 16S rRNA, required for the assembly of 30S particles and may also be responsible for determining the conformation of the 16S rRNA at the A site. This chain is Small ribosomal subunit protein uS14, found in Chlorobium chlorochromatii (strain CaD3).